Consider the following 179-residue polypeptide: O-acetyl-ADP-ribose deacetylase (179 aa).

Residues Met1–Gly175 enclose the Macro domain. Substrate contacts are provided by residues Asp11–Ile12, Asn25, Gly33–Asp35, and Ser122–Tyr126. Asp35 serves as the catalytic Proton acceptor.

The protein belongs to the MacroD-type family. YmdB subfamily. As to quaternary structure, homodimer. Interacts with RNase III.

The enzyme catalyses 3''-O-acetyl-ADP-D-ribose + H2O = ADP-D-ribose + acetate + H(+). The catalysed reaction is 2''-O-acetyl-ADP-D-ribose + H2O = ADP-D-ribose + acetate + H(+). Functionally, deacetylates O-acetyl-ADP ribose to yield ADP-ribose and free acetate. Down-regulates ribonuclease 3 (RNase III) activity. Acts by interacting directly with the region of the ribonuclease that is required for dimerization/activation. This chain is O-acetyl-ADP-ribose deacetylase, found in Salmonella newport (strain SL254).